Here is a 205-residue protein sequence, read N- to C-terminus: Holliday junction branch migration complex subunit RuvA (205 aa).

The segment at 1-64 (MIGKLKGVVD…EDMIRLYGFR (64 aa)) is domain I. Residues 65–143 (SDAEREWFRL…AFAPVDPALI (79 aa)) are domain II. The interval 144 to 152 (RLAGAVEER) is flexible linker. A domain III region spans residues 153-205 (TAPQPVADAISALVNLGYPQIQASAAVAAALQGAGEGAEAKTLIRLGLRELAR).

It belongs to the RuvA family. Homotetramer. Forms an RuvA(8)-RuvB(12)-Holliday junction (HJ) complex. HJ DNA is sandwiched between 2 RuvA tetramers; dsDNA enters through RuvA and exits via RuvB. An RuvB hexamer assembles on each DNA strand where it exits the tetramer. Each RuvB hexamer is contacted by two RuvA subunits (via domain III) on 2 adjacent RuvB subunits; this complex drives branch migration. In the full resolvosome a probable DNA-RuvA(4)-RuvB(12)-RuvC(2) complex forms which resolves the HJ.

The protein localises to the cytoplasm. In terms of biological role, the RuvA-RuvB-RuvC complex processes Holliday junction (HJ) DNA during genetic recombination and DNA repair, while the RuvA-RuvB complex plays an important role in the rescue of blocked DNA replication forks via replication fork reversal (RFR). RuvA specifically binds to HJ cruciform DNA, conferring on it an open structure. The RuvB hexamer acts as an ATP-dependent pump, pulling dsDNA into and through the RuvAB complex. HJ branch migration allows RuvC to scan DNA until it finds its consensus sequence, where it cleaves and resolves the cruciform DNA. The sequence is that of Holliday junction branch migration complex subunit RuvA from Methylobacterium nodulans (strain LMG 21967 / CNCM I-2342 / ORS 2060).